The chain runs to 299 residues: rRNA methyltransferase (299 aa).

The segment at 14–53 (AEKRSGRGRMAAARTTGAQSRKTAQRSGRSEADRRRRVHG) is disordered. A compositionally biased stretch (low complexity) spans 21–31 (GRMAAARTTGA). 6 residues coordinate S-adenosyl-L-methionine: N55, L57, G82, E103, D128, and N144.

This sequence belongs to the class I-like SAM-binding methyltransferase superfamily. rRNA adenine N(6)-methyltransferase family.

Functionally, probable RNA methylase. Confers resistance to carbomycin and several other macrolides, lincomycin and vernamycin B, but not to all macrolide-lincosamide-streptogramin B antibiotics. This Streptomyces thermotolerans protein is rRNA methyltransferase (carB).